We begin with the raw amino-acid sequence, 452 residues long: Trigger factor (452 aa).

The PPIase FKBP-type domain maps to 170–255 (GDRVTIDFTG…VKSVAAPGPL (86 aa)).

Belongs to the FKBP-type PPIase family. Tig subfamily.

Its subcellular location is the cytoplasm. The enzyme catalyses [protein]-peptidylproline (omega=180) = [protein]-peptidylproline (omega=0). Its function is as follows. Involved in protein export. Acts as a chaperone by maintaining the newly synthesized protein in an open conformation. Functions as a peptidyl-prolyl cis-trans isomerase. This chain is Trigger factor, found in Xanthobacter autotrophicus (strain ATCC BAA-1158 / Py2).